Consider the following 635-residue polypeptide: Biosynthetic arginine decarboxylase (635 aa).

At Lys-100 the chain carries N6-(pyridoxal phosphate)lysine. Position 282-292 (282-292 (VDIGGGLGVDY)) interacts with substrate.

The protein belongs to the Orn/Lys/Arg decarboxylase class-II family. SpeA subfamily. Requires Mg(2+) as cofactor. It depends on pyridoxal 5'-phosphate as a cofactor.

The enzyme catalyses L-arginine + H(+) = agmatine + CO2. Its pathway is amine and polyamine biosynthesis; agmatine biosynthesis; agmatine from L-arginine: step 1/1. Its function is as follows. Catalyzes the biosynthesis of agmatine from arginine. The sequence is that of Biosynthetic arginine decarboxylase from Geobacter sulfurreducens (strain ATCC 51573 / DSM 12127 / PCA).